We begin with the raw amino-acid sequence, 60 residues long: Large ribosomal subunit protein uL30 (60 aa).

This sequence belongs to the universal ribosomal protein uL30 family. As to quaternary structure, part of the 50S ribosomal subunit.

The polypeptide is Large ribosomal subunit protein uL30 (Pediococcus pentosaceus (strain ATCC 25745 / CCUG 21536 / LMG 10740 / 183-1w)).